Reading from the N-terminus, the 323-residue chain is Fructose-1,6-bisphosphatase class 1 (323 aa).

The Mg(2+) site is built by Glu-93, Asp-114, Leu-116, and Asp-117. Substrate contacts are provided by residues 117–120 (DGSS), Asn-205, Tyr-233, and Lys-263. Glu-269 contacts Mg(2+).

The protein belongs to the FBPase class 1 family. As to quaternary structure, homotetramer. The cofactor is Mg(2+).

The protein resides in the cytoplasm. It carries out the reaction beta-D-fructose 1,6-bisphosphate + H2O = beta-D-fructose 6-phosphate + phosphate. The protein operates within carbohydrate biosynthesis; gluconeogenesis. The polypeptide is Fructose-1,6-bisphosphatase class 1 (Sulfurihydrogenibium sp. (strain YO3AOP1)).